Consider the following 556-residue polypeptide: MKTDVQIAQEAQMKPITEVANYLGIQDDELELYGKYKAKVSLDVLERQKDKEDAKLVLVTAINPTPAGEGKTTTNVGLSMGLNKIGKRTITALREPSLGPCFGVKGGAAGGGYAQVVPMDDINLHFTGDFHAITSAHNLLAALLDNHLHQGNALNINPKKIVWKRVIDMNDRSLRNVIIGLGGNGDGFVRQAQFDITVASEIMAILCLATSMSDLKERLSKMIVAYAKDGSAVTAGQLEATGAMALLLKDAVKPNLVQTLENTPAFIHGGPFANIAHGCNSVLATKVALKLADYVVTEGGFGADLGAEKFFDIKSRFAGLKPNCDVSVATVRALKMNGGVPKTELAAENVEAVKKGVANLERHIENVAKFGVPAVVAINKFPLDTEAELKAVEDACNAKGADVVLSDVWANGGEGGVEMAKKVVEICEKNEANFAPLYDVNLSIPEKIEKIATTIYRADGVDFTSDCKKQIAELEKLGLDKMPICMAKTQYSFSDDPTLLGAPTGFRITVREVRVSAGAGFIVALTGNMMTMPGLPKVPAANGMDILESGEIIGLS.

65-72 (TPAGEGKT) provides a ligand contact to ATP.

It belongs to the formate--tetrahydrofolate ligase family.

It catalyses the reaction (6S)-5,6,7,8-tetrahydrofolate + formate + ATP = (6R)-10-formyltetrahydrofolate + ADP + phosphate. The protein operates within one-carbon metabolism; tetrahydrofolate interconversion. The sequence is that of Formate--tetrahydrofolate ligase from Clostridium cylindrosporum.